The primary structure comprises 88 residues: MMKSAILLMVSCVFMFLVVSYIQDVEGANKRCHLNQMFTGKCGNDGNKACLGDFKNKRFRYDLCQCTDATQISPSLPPQRVCNCSRPC.

The first 27 residues, 1 to 27 (MMKSAILLMVSCVFMFLVVSYIQDVEG), serve as a signal peptide directing secretion. 4 disulfide bridges follow: Cys-32-Cys-88, Cys-42-Cys-66, Cys-50-Cys-82, and Cys-64-Cys-84.

This sequence belongs to the DEFL family.

The protein localises to the secreted. The sequence is that of Putative defensin-like protein 228 (SCRL3) from Arabidopsis thaliana (Mouse-ear cress).